The chain runs to 383 residues: MSLVDLGKKLLEAARAGQDDEVRILMANGAPFTTDWLGTSPLHLAAQYGHYSTTEVLLRAGVSRDARTKVDRTPLHMAASEGHASIVEVLLKHGADVNAKDMLKMTALHWATEHNHQEVVELLIKYGADVHTQSKFCKTAFDISIDNGNEDLAEILQIAMQNQINTNPESPDTVTIHAATPQFIIGPGGVVNLTDETGVSAVQFGNSSTSVLATLAALAEASAPLSNSSETPVVATEEVVTAESVDGAIQQVVSSGGQQVITIVTDGIQLGNLHSIPTSGIGQPIIVTMPDGQQVLTVPATDIAEETVISEEPPAKRQCIEIIENRVESAEIEEREALQKQLDEANREAQKYRQQLLKKEQEAEAYRQKLEAMTRLQTNKEAV.

Ser-2 is modified (N-acetylserine). ANK repeat units follow at residues 5-34 (DLGK…PFTT) and 37-66 (LGTS…SRDA). Position 69 is an N6-acetyllysine (Lys-69). ANK repeat units follow at residues 70–99 (VDRT…DVNA), 103–132 (LKMT…DVHT), and 136–166 (FCKT…QINT). Lys-340 and Lys-369 each carry N6-acetyllysine.

As to quaternary structure, heterotetramer of two alpha and two beta subunits. Interacts with HCFC1, causing repression of transcriptional activity. Post-translationally, acetylated by EP300/p300. Deacetylated by SIRT7, promoting heterotetramerization and activity.

It localises to the nucleus. In terms of biological role, transcription factor capable of interacting with purine rich repeats (GA repeats). Acts as a master regulator of nuclear-encoded mitochondrial genes. The chain is GA-binding protein subunit beta-1 (GABPB1) from Bos taurus (Bovine).